The sequence spans 109 residues: Large ribosomal subunit protein uL22 (109 aa).

Belongs to the universal ribosomal protein uL22 family. As to quaternary structure, part of the 50S ribosomal subunit.

Functionally, this protein binds specifically to 23S rRNA; its binding is stimulated by other ribosomal proteins, e.g. L4, L17, and L20. It is important during the early stages of 50S assembly. It makes multiple contacts with different domains of the 23S rRNA in the assembled 50S subunit and ribosome. Its function is as follows. The globular domain of the protein is located near the polypeptide exit tunnel on the outside of the subunit, while an extended beta-hairpin is found that lines the wall of the exit tunnel in the center of the 70S ribosome. This is Large ribosomal subunit protein uL22 from Dechloromonas aromatica (strain RCB).